The chain runs to 551 residues: Cilia- and flagella-associated protein 45 (551 aa).

Disordered stretches follow at residues Met1–Ser52, Met232–Arg256, and Glu385–Glu415. The span at Ala8–Arg18 shows a compositional bias: low complexity. A coiled-coil region spans residues Ala276–Glu524. Basic and acidic residues predominate over residues Asp387 to Glu415.

It belongs to the CFAP45 family. Microtubule inner protein component of sperm flagellar doublet microtubules. Interacts with AK8; dimerization with AK8 may create a cavity at the interface of the dimer that can accommodate AMP. Interacts with CFAP52. Interacts with ENKUR. Directly interacts with DNALI1. Interacts with DNAH11. Interacts with DNAI1. Expressed in respiratory cells and in sperm (at protein level).

The protein localises to the cytoplasm. It is found in the cytoskeleton. It localises to the cilium axoneme. Its subcellular location is the flagellum axoneme. The protein resides in the cell projection. The protein localises to the cilium. It is found in the flagellum. Its function is as follows. Microtubule inner protein (MIP) part of the dynein-decorated doublet microtubules (DMTs) in cilia axoneme, which is required for motile cilia beating. It is an AMP-binding protein that may facilitate dynein ATPase-dependent ciliary and flagellar beating via adenine nucleotide homeostasis. May function as a donor of AMP to AK8 and hence promote ADP production. The sequence is that of Cilia- and flagella-associated protein 45 (Cfap45) from Mus musculus (Mouse).